The sequence spans 299 residues: Acetyl-hydrolase (299 aa).

Residues 73 to 75 carry the Involved in the stabilization of the negatively charged intermediate by the formation of the oxyanion hole motif; the sequence is HGG. Residues serine 143, glutamate 237, and histidine 267 contribute to the active site.

The protein belongs to the 'GDXG' lipolytic enzyme family.

Its pathway is secondary metabolite biosynthesis; bialaphos biosynthesis. This protein removes the N-acetyl group from bialaphos as one of the final steps of biosynthesis of phosphinothricin tripeptide (PTT), also known as bialaphos (BA), a natural-product antibiotic and potent herbicide. This chain is Acetyl-hydrolase (bah), found in Streptomyces hygroscopicus.